The chain runs to 752 residues: MKQRGWTLQCTAFTLFCVWCALNSVKAKRQFVNEWAAEIHGGPEAASAIAEELGYDLLGQIGSLENHYLFKHKNHPRRSRRSALHITKRLSDDDRVIWAEQQYEKERRKRSVPRDSALNLFNDPMWNQQWYLQDTRMTASLPKLDLHVIPVWQKGITGKGVVITVLDDGLEWNHTDIYANYDPEASYDFNDNDHDPFPRYDPTNENKHGTRCAGEIAMQANNHKCGVGVAYNSKVGGIRMLDGIVTDAIEASSIGFNPGHVDIYSASWGPNDDGKTVEGPGRLAQKAFEYGVKQGRQGKGSIFVWASGNGGRQGDNCDCDGYTDSIYTISISSASQQGLSPWYAEKCSSTLATSYSSGDYTDQRITSADLHNDCTETHTGTSASAPLAAGIFALALEANPNLTWRDMQHLVVWTSEYDPLANNPGWKKNGAGLMVNSRFGFGLLNAKALVDLADPRTWRNVPEKKECIIKDNNFEPRALKANGEVIVEIPTRACEGQENAINSLEHVQFEATIEYSRRGDLHVTLTSAAGTSTVLLAERERDTSPNGFKNWDFMSVHTWGENPVGTWTLKVTDMSGRMQNEGRIVNWKLILHGTSSQPEHMKQPRVYTSYNTVQNDRRGVEKMVNVVEEKPTQNSLNGNLLVPKNSSSSSVEDRRDEQVQGAPSKAMLRLLQSAFSKNTPSKQSSKIPSAKLSVPYEGLYEALEKLNKPSQLEDSEDSLYSDYVDVFYNTKPYKHRDDRLLQALMDILNEKN.

Positions 1–27 (MKQRGWTLQCTAFTLFCVWCALNSVKA) are cleaved as a signal peptide. Positions 28–110 (KRQFVNEWAA…QQYEKERRKR (83 aa)) are excised as a propeptide. The 322-residue stretch at 129-450 (QWYLQDTRMT…FGLLNAKALV (322 aa)) folds into the Peptidase S8 domain. The active-site Charge relay system is the D167. N-linked (GlcNAc...) asparagine glycosylation occurs at N173. H208 (charge relay system) is an active-site residue. Disulfide bonds link C225-C374 and C317-C347. S382 serves as the catalytic Charge relay system. Residue N401 is glycosylated (N-linked (GlcNAc...) asparagine). The 138-residue stretch at 460–597 (NVPEKKECII…KLILHGTSSQ (138 aa)) folds into the P/Homo B domain. An intrachain disulfide couples C467 to C494. Positions 631-662 (PTQNSLNGNLLVPKNSSSSSVEDRRDEQVQGA) are disordered. The N-linked (GlcNAc...) asparagine glycan is linked to N645.

Belongs to the peptidase S8 family. Furin subfamily. It depends on Ca(2+) as a cofactor.

Its subcellular location is the cytoplasmic vesicle. The protein resides in the secretory vesicle. The enzyme catalyses Release of protein hormones, neuropeptides and renin from their precursors, generally by hydrolysis of -Lys-Arg-|- bonds.. Functionally, involved in the processing of hormone and other protein precursors at sites comprised of pairs of basic amino acid residues. Substrates include POMC, renin, enkephalin, dynorphin, somatostatin, insulin and AGRP. This Rattus norvegicus (Rat) protein is Neuroendocrine convertase 1 (Pcsk1).